Consider the following 499-residue polypeptide: Aspartyl/glutamyl-tRNA(Asn/Gln) amidotransferase subunit B (499 aa).

It belongs to the GatB/GatE family. GatB subfamily. As to quaternary structure, heterotrimer of A, B and C subunits.

It carries out the reaction L-glutamyl-tRNA(Gln) + L-glutamine + ATP + H2O = L-glutaminyl-tRNA(Gln) + L-glutamate + ADP + phosphate + H(+). It catalyses the reaction L-aspartyl-tRNA(Asn) + L-glutamine + ATP + H2O = L-asparaginyl-tRNA(Asn) + L-glutamate + ADP + phosphate + 2 H(+). Allows the formation of correctly charged Asn-tRNA(Asn) or Gln-tRNA(Gln) through the transamidation of misacylated Asp-tRNA(Asn) or Glu-tRNA(Gln) in organisms which lack either or both of asparaginyl-tRNA or glutaminyl-tRNA synthetases. The reaction takes place in the presence of glutamine and ATP through an activated phospho-Asp-tRNA(Asn) or phospho-Glu-tRNA(Gln). In Mesorhizobium japonicum (strain LMG 29417 / CECT 9101 / MAFF 303099) (Mesorhizobium loti (strain MAFF 303099)), this protein is Aspartyl/glutamyl-tRNA(Asn/Gln) amidotransferase subunit B.